A 236-amino-acid chain; its full sequence is MPPRELSEAEPPPLPASTPPPRRRSAPPELGIKCVLVGDGAVGKSSLIVSYTCNGYPSRYRPTALDTFSVQVLVDGAPVRIELWDTAGQEDFDRLRSLCYPDTDVFLACFSVVQPSSFQNITEKWLPEIRTHNPQAPVLLVGTQADLRDDVNVLIQLDQGGREGPVPEPQAQGLAEKIRACCYLECSALTQKNLKEVFDSAILSAIEHKARLEKKLNAKGVRTLSRCRWKKFFCFV.

The tract at residues 1-28 is disordered; that stretch reads MPPRELSEAEPPPLPASTPPPRRRSAPP. A compositionally biased stretch (pro residues) spans 10 to 20; sequence EPPPLPASTPP. At Ser-25 the chain carries Phosphoserine. GTP contacts are provided by residues 38-45, 85-89, and 143-146; these read GDGAVGKS, DTAGQ, and TQAD. Residue Cys-234 is the site of S-palmitoyl cysteine attachment.

This sequence belongs to the small GTPase superfamily. Rho family. Interacts with PAK2. It depends on Mg(2+) as a cofactor. Highly expressed in brain and testis and at lower levels in spleen and lung.

It is found in the cell membrane. The protein localises to the endosome membrane. In terms of biological role, plays a role in the control of the actin cytoskeleton via activation of the JNK pathway. This Rattus norvegicus (Rat) protein is Rho-related GTP-binding protein RhoV.